Here is a 376-residue protein sequence, read N- to C-terminus: NAD-capped RNA hydrolase (376 aa).

Positions 182, 185, 200, and 211 each coordinate Zn(2+). Residues tyrosine 222, 258 to 260, glutamate 274, glutamate 278, and glutamate 321 contribute to the substrate site; that span reads AGF. The Nudix hydrolase domain occupies 223-351; the sequence is PRTDPCVIMV…KDGPAPILFP (129 aa). The Mg(2+) site is built by alanine 258, glutamate 274, glutamate 278, and glutamate 321. The Nudix box motif lies at 259–280; it reads GFLEPGESLEEAVVRETYEESG. The Microbody targeting signal signature appears at 374 to 376; it reads VKM.

The protein belongs to the Nudix hydrolase family. NudC subfamily. In terms of assembly, homodimer. Requires Mg(2+) as cofactor. It depends on Zn(2+) as a cofactor.

The enzyme catalyses a 5'-end NAD(+)-phospho-ribonucleoside in mRNA + H2O = a 5'-end phospho-adenosine-phospho-ribonucleoside in mRNA + beta-nicotinamide D-ribonucleotide + 2 H(+). It carries out the reaction NAD(+) + H2O = beta-nicotinamide D-ribonucleotide + AMP + 2 H(+). It catalyses the reaction NADH + H2O = reduced beta-nicotinamide D-ribonucleotide + AMP + 2 H(+). MRNA decapping enzyme that specifically removes the nicotinamide adenine dinucleotide (NAD) cap from a subset of mRNAs by hydrolyzing the diphosphate linkage to produce nicotinamide mononucleotide (NMN) and 5' monophosphate mRNA. The NAD-cap is present at the 5'-end of some RNAs; in contrast to the canonical N7 methylguanosine (m7G) cap, the NAD cap promotes mRNA decay. Mediates the hydrolysis of some nucleoside diphosphate derivatives. The protein is NAD-capped RNA hydrolase of Schizosaccharomyces pombe (strain 972 / ATCC 24843) (Fission yeast).